Consider the following 982-residue polypeptide: Polyribonucleotide nucleotidyltransferase 2, mitochondrial (982 aa).

The transit peptide at 1 to 39 (MSMAVASLRLLARGGRRRARFPAPLSVPGGRAAFLSGAA) directs the protein to the mitochondrion. In terms of domain architecture, KH spans 624-678 (PRLATLSFSSDSLRKLLFHRKKIEQETGARVSVSDGTVTIVAKTQPIMDKAIEKV). Residues 689-757 (GRTYKGVVSS…LRGNIKLSLK (69 aa)) enclose the S1 motif 1 domain. Disordered stretches follow at residues 792-814 (PSKD…EETP) and 832-892 (QDVT…NDVL). Low complexity-rich tracts occupy residues 846–855 (AKSSPKLSKP) and 868–877 (KKTSGASTTA). One can recognise an S1 motif 2 domain in the interval 920–982 (GDVVTAKVYQ…KGIPVFSLLD (63 aa)).

The protein belongs to the polyribonucleotide nucleotidyltransferase family.

Its subcellular location is the mitochondrion. It catalyses the reaction RNA(n+1) + phosphate = RNA(n) + a ribonucleoside 5'-diphosphate. Functionally, involved in the 3'-end maturation of mitochondrial mRNAs, rRNAs and tRNAs. Functions as a poly(A) mRNA 3'-5' degrading phosphorylase. This Oryza sativa subsp. japonica (Rice) protein is Polyribonucleotide nucleotidyltransferase 2, mitochondrial (PNP2).